Here is a 199-residue protein sequence, read N- to C-terminus: ATP-dependent Clp protease proteolytic subunit (199 aa).

Residue S98 is the Nucleophile of the active site. H123 is a catalytic residue.

It belongs to the peptidase S14 family. Fourteen ClpP subunits assemble into 2 heptameric rings which stack back to back to give a disk-like structure with a central cavity, resembling the structure of eukaryotic proteasomes.

The protein localises to the cytoplasm. The enzyme catalyses Hydrolysis of proteins to small peptides in the presence of ATP and magnesium. alpha-casein is the usual test substrate. In the absence of ATP, only oligopeptides shorter than five residues are hydrolyzed (such as succinyl-Leu-Tyr-|-NHMec, and Leu-Tyr-Leu-|-Tyr-Trp, in which cleavage of the -Tyr-|-Leu- and -Tyr-|-Trp bonds also occurs).. In terms of biological role, cleaves peptides in various proteins in a process that requires ATP hydrolysis. Has a chymotrypsin-like activity. Plays a major role in the degradation of misfolded proteins. The protein is ATP-dependent Clp protease proteolytic subunit of Clostridium botulinum (strain Eklund 17B / Type B).